Reading from the N-terminus, the 430-residue chain is Adenylosuccinate synthetase (430 aa).

GTP contacts are provided by residues 13–19 and 41–43; these read GDEGKGK and GHT. Catalysis depends on Asp-14, which acts as the Proton acceptor. Residues Asp-14 and Gly-41 each coordinate Mg(2+). IMP-binding positions include 14–17, 39–42, Thr-130, Arg-144, Gln-225, Thr-240, and Arg-304; these read DEGK and NAGH. The Proton donor role is filled by His-42. 300-306 is a binding site for substrate; the sequence is ASTGRPR. GTP contacts are provided by residues Arg-306, 332–334, and 414–416; these read KLD and STG.

This sequence belongs to the adenylosuccinate synthetase family. Homodimer. It depends on Mg(2+) as a cofactor.

It is found in the cytoplasm. It catalyses the reaction IMP + L-aspartate + GTP = N(6)-(1,2-dicarboxyethyl)-AMP + GDP + phosphate + 2 H(+). It participates in purine metabolism; AMP biosynthesis via de novo pathway; AMP from IMP: step 1/2. Its function is as follows. Plays an important role in the de novo pathway of purine nucleotide biosynthesis. Catalyzes the first committed step in the biosynthesis of AMP from IMP. The sequence is that of Adenylosuccinate synthetase from Xanthomonas oryzae pv. oryzae (strain MAFF 311018).